We begin with the raw amino-acid sequence, 493 residues long: Guanosine-5'-triphosphate,3'-diphosphate pyrophosphatase (493 aa).

Belongs to the GppA/Ppx family. GppA subfamily.

It catalyses the reaction guanosine 3'-diphosphate 5'-triphosphate + H2O = guanosine 3',5'-bis(diphosphate) + phosphate + H(+). It functions in the pathway purine metabolism; ppGpp biosynthesis; ppGpp from GTP: step 2/2. Its function is as follows. Catalyzes the conversion of pppGpp to ppGpp. Guanosine pentaphosphate (pppGpp) is a cytoplasmic signaling molecule which together with ppGpp controls the 'stringent response', an adaptive process that allows bacteria to respond to amino acid starvation, resulting in the coordinated regulation of numerous cellular activities. The sequence is that of Guanosine-5'-triphosphate,3'-diphosphate pyrophosphatase from Salmonella paratyphi B (strain ATCC BAA-1250 / SPB7).